A 321-amino-acid chain; its full sequence is Reticulon-2 (321 aa).

Disordered regions lie at residues 1–36 (MGHV…SPVT) and 65–85 (PPVR…PREE). The Reticulon domain occupies 134–321 (VKDLLYWRDI…TVKKPPAKQK (188 aa)). 2 helical membrane passes run 163–183 (FSVI…TLTL) and 250–270 (FLVI…ITVL).

The protein resides in the endoplasmic reticulum membrane. It localises to the sarcoplasmic reticulum membrane. It is found in the cell membrane. Its subcellular location is the sarcolemma. The protein localises to the T-tubule. The protein resides in the cytoplasm. It localises to the myofibril. It is found in the sarcomere. Its subcellular location is the z line. The protein localises to the cytoskeleton. Inhibits amyloid precursor protein processing, probably by blocking BACE1 activity. Enhances trafficking of the glutamate transporter SLC1A1/EAAC1 from the endoplasmic reticulum to the cell surface. Plays a role in the translocation of SLC2A4/GLUT4 from intracellular membranes to the cell membrane which facilitates the uptake of glucose into the cell. The sequence is that of Reticulon-2 from Xenopus tropicalis (Western clawed frog).